Here is a 565-residue protein sequence, read N- to C-terminus: MARPKNVKHIFVTGGVISSLGKGILSASLGLLLKSRGLRVAIQKYDPYINVDPGTMSPYQHGEVYVTDDGAETDLDLGHYERFLDEPTSQACNLTMGRVYKSVIDKERRGEYLGGTVQVVPHVIDEIKEKMGDLAKNGSIDVLITEIGGTIGDIESLPFLEAMRQLKLELGEHNLLNIHLTFVPYIKAASELKTKPTQHSVKMLLETGIQPDILVCRSEKPLSREIKNKVGHFCNVHDLDVIGLNDCDTIYEVPLMLLKEQLDLRVMKKLGLKKFREPNLEYWKNFCEKVKHPKDGEITIGICGKYTEYPDAYKSIIESFIHAGASNDVRVLVKMLRAEDAEDPKFDISSAFKGISGLLVAPGFGDRGIEGKVRFVQYARENNIPFFGICLGMQCATIEFARNICDLPDANSTEFNKRTRFPVIDLMEHQKKVKEKGGTMRLGSYPCILKEGSKAHELYGKFLINERHRHRYEFNNQFRKLFEEKGMIFSGTSPNGDLVEIVELKNHRWFVAVQFHPELKSRVQKVHPLFDGFVHAAKEFAQGKRQLSLEVEMPRLSSTEMENAG.

The amidoligase domain stretch occupies residues 1–272 (MARPKNVKHI…DLRVMKKLGL (272 aa)). A CTP-binding site is contributed by Ser18. Ser18 provides a ligand contact to UTP. 19–24 (SLGKGI) is a binding site for ATP. Tyr59 contributes to the L-glutamine binding site. Asp76 is an ATP binding site. Residues Asp76 and Glu146 each contribute to the Mg(2+) site. CTP-binding positions include 153–155 (DIE), 193–198 (KTKPTQ), and Lys229. UTP-binding positions include 193-198 (KTKPTQ) and Lys229. The Glutamine amidotransferase type-1 domain occupies 299-543 (TIGICGKYTE…VHAAKEFAQG (245 aa)). Gly363 is an L-glutamine binding site. The Nucleophile; for glutamine hydrolysis role is filled by Cys390. Residues 391–394 (LGMQ), Glu414, and Arg471 each bind L-glutamine. Active-site residues include His516 and Glu518.

Belongs to the CTP synthase family. In terms of assembly, homotetramer.

It catalyses the reaction UTP + L-glutamine + ATP + H2O = CTP + L-glutamate + ADP + phosphate + 2 H(+). The enzyme catalyses L-glutamine + H2O = L-glutamate + NH4(+). It carries out the reaction UTP + NH4(+) + ATP = CTP + ADP + phosphate + 2 H(+). It participates in pyrimidine metabolism; CTP biosynthesis via de novo pathway; CTP from UDP: step 2/2. Allosterically activated by GTP, when glutamine is the substrate; GTP has no effect on the reaction when ammonia is the substrate. The allosteric effector GTP functions by stabilizing the protein conformation that binds the tetrahedral intermediate(s) formed during glutamine hydrolysis. Inhibited by the product CTP, via allosteric rather than competitive inhibition. Functionally, catalyzes the ATP-dependent amination of UTP to CTP with either L-glutamine or ammonia as the source of nitrogen. Regulates intracellular CTP levels through interactions with the four ribonucleotide triphosphates. This is CTP synthase from Chlorobaculum tepidum (strain ATCC 49652 / DSM 12025 / NBRC 103806 / TLS) (Chlorobium tepidum).